The sequence spans 4814 residues: Nonribosomal peptide synthetase SIDC (4814 aa).

The adenylation 1 stretch occupies residues Pro-21 to Ala-453. The Carrier 1 domain occupies Asp-528 to Asp-601. An O-(pantetheine 4'-phosphoryl)serine modification is found at Ser-562. The tract at residues Val-637–Glu-1045 is condensation 1. Residues Thr-1101–Val-1488 form an adenylation 2 region. Carrier domains lie at Glu-1589 to His-1666 and Ser-2134 to Gly-2210. O-(pantetheine 4'-phosphoryl)serine is present on residues Ser-1626 and Ser-2171. Condensation regions lie at residues Leu-1706 to Gly-2210 and Leu-2243 to Asp-2649. The segment at Thr-2709–Val-3100 is adenylation 3. In terms of domain architecture, Carrier 4 spans Ser-3203–Ser-3280. The residue at position 3240 (Ser-3240) is an O-(pantetheine 4'-phosphoryl)serine. The condensation 4 stretch occupies residues Tyr-3319–Ala-3732. In terms of domain architecture, Carrier 5 spans Glu-3747 to Thr-3823. Ser-3784 bears the O-(pantetheine 4'-phosphoryl)serine mark. Residues Asp-3857 to Val-4258 are condensation 5. The region spanning Asn-4295 to Gly-4368 is the Carrier 6 domain. Ser-4329 is subject to O-(pantetheine 4'-phosphoryl)serine. The condensation 6 stretch occupies residues Glu-4504–Asp-4686.

Belongs to the NRP synthetase family. Requires pantetheine 4'-phosphate as cofactor.

The protein operates within siderophore biosynthesis. Its function is as follows. Nonribosomal peptide synthetase; part of the gene cluster that mediates the biosynthesis of at least 11 siderophores, including beauverichelin A, dimerumic acid (DA), Na-dimethyl coprogen (NADC), eleutherazine B, ferricrocin (FC), fusarinine A, fusarinine C (FsC), metachelin A, mevalonolactone, rhodotorulic acid (RA) and tenellin. This cocktail of siderophores for iron metabolism is essential for virulence, and more specifically for the fungal virulence in penetrating through the host cuticle. Siderophore synthesis is also involved in conidial germination under iron-deficient conditions. SIDC catalyzes the assembly of ferricrocin whereas SIDD catalyzes the assembly of fusarinine C. This is Nonribosomal peptide synthetase SIDC from Beauveria bassiana (strain ARSEF 2860) (White muscardine disease fungus).